Reading from the N-terminus, the 427-residue chain is 12-alpha,13-alpha-dihydroxyfumitremorgin C prenyltransferase (427 aa).

Glutamate 94 is a binding site for substrate. 8 residues coordinate dimethylallyl diphosphate: arginine 105, lysine 192, tyrosine 194, tyrosine 268, glutamine 353, tyrosine 355, tyrosine 419, and tyrosine 423.

Belongs to the tryptophan dimethylallyltransferase family.

It catalyses the reaction 12alpha,13alpha-dihydroxyfumitremorgin C + dimethylallyl diphosphate = fumitremorgin B + diphosphate. It functions in the pathway mycotoxin biosynthesis. Its function is as follows. 12-alpha,13-alpha-dihydroxyfumitremorgin C prenyltransferase; part of the gene cluster that mediates the biosynthesis of fumitremorgins, indole alkaloids that carry not only intriguing chemical structures, but also interesting biological and pharmacological activities. The biosynthesis of fumitremorgin-type alkaloids begins by condensation of the two amino acids L-tryptophan and L-proline to brevianamide F, catalyzed by the non-ribosomal peptide synthetase ftmA. Brevianamide F is then prenylated by the prenyltransferase ftmPT1/ftmB in the presence of dimethylallyl diphosphate, resulting in the formation of tryprostatin B. The three cytochrome P450 monooxygenases, ftmP450-1/ftmC, ftmP450-2/ftmE and ftmP450-3/FtmG, are responsible for the conversion of tryprostatin B to 6-hydroxytryprostatin B, tryprostatin A to fumitremorgin C and fumitremorgin C to 12,13-dihydroxyfumitremorgin C, respectively. The putative methyltransferase ftmMT/ftmD is expected for the conversion of 6-hydroxytryprostatin B to tryprostatin A. FtmPT2/FtmH catalyzes the prenylation of 12,13-dihydroxyfumitre-morgin C in the presence of dimethylallyl diphosphate, resulting in the formation of fumitremorgin B. Fumitremorgin B is further converted to verruculogen by ftmOx1/ftmF via the insertion of an endoperoxide bond between the two prenyl moieties. In some fungal species, verruculogen is further converted to fumitremorgin A, but the enzymes involved in this step have not been identified yet. The chain is 12-alpha,13-alpha-dihydroxyfumitremorgin C prenyltransferase from Aspergillus fumigatus (Neosartorya fumigata).